We begin with the raw amino-acid sequence, 343 residues long: Dihydroorotase (343 aa).

Residues H13 and H15 each contribute to the Zn(2+) site. Substrate contacts are provided by residues 15-17 and N41; that span reads HLR. Residues K99, H136, and H174 each contribute to the Zn(2+) site. Residue K99 is modified to N6-carboxylysine. H136 is a substrate binding site. Substrate is bound at residue L219. D247 serves as a coordination point for Zn(2+). Residue D247 is part of the active site. Positions 251 and 263 each coordinate substrate.

The protein belongs to the metallo-dependent hydrolases superfamily. DHOase family. Class II DHOase subfamily. Homodimer. It depends on Zn(2+) as a cofactor.

It catalyses the reaction (S)-dihydroorotate + H2O = N-carbamoyl-L-aspartate + H(+). Its pathway is pyrimidine metabolism; UMP biosynthesis via de novo pathway; (S)-dihydroorotate from bicarbonate: step 3/3. In terms of biological role, catalyzes the reversible cyclization of carbamoyl aspartate to dihydroorotate. The protein is Dihydroorotase of Shewanella sp. (strain ANA-3).